Reading from the N-terminus, the 230-residue chain is Cell division ATP-binding protein FtsE (230 aa).

The ABC transporter domain occupies 3–228; the sequence is ITLDHVTKQY…RDEQRGVYGM (226 aa). 37-44 is a binding site for ATP; the sequence is GPSGSGKS.

Belongs to the ABC transporter superfamily. In terms of assembly, homodimer. Forms a membrane-associated complex with FtsX.

It is found in the cell membrane. Its function is as follows. Part of the ABC transporter FtsEX involved in cellular division. Has ATPase activity. The protein is Cell division ATP-binding protein FtsE of Mycobacterium tuberculosis (strain ATCC 25618 / H37Rv).